Here is a 63-residue protein sequence, read N- to C-terminus: Large ribosomal subunit protein bL35 (63 aa).

It belongs to the bacterial ribosomal protein bL35 family.

The protein is Large ribosomal subunit protein bL35 of Campylobacter jejuni (strain RM1221).